Consider the following 481-residue polypeptide: MSLYMVRYSEIGLKGDRERSRMESILMDNIRKYYEIIGLRASCRIMSGHVLVEADGDGPLRHIMGIKSYSPVLRFRAETLEDITRIASEIYREKVRGKTFGVRCNRTGTHSFTSLDVERAIGDSLYDASAGVNLKNPDIWIHADIVGKDVFFYHEIIPGPGGLPLGSEGKYISLVSGGIDSPVSTWMIMKRGSPCDILFCSLSYPVDLRPFVDVVKKLVERWAPYRKPRIYVADCRSLIRTMVIEGRTKYSNVTFKRVIYRIAEKIALENGYNGIVTGESLGQVSSQTAENLKAIESGIGVPILRPLIGMDKDEVVDMARRIGTFPELSMGEFCSLFASRPIIRSKPEDIDEDMKQIDMEELFEGIRAYDIDDLSVALRTDLSLKGSIPKDAVIIDLRSRSQYEKDHIPNSINLPLGDAINVEDKGRTYVVYCGMGLQSAYVASMLRNRGITAYYSTFSDLKKRLSEKESGNITGIDQPAE.

The THUMP domain maps to Ala54–Ile156. ATP-binding positions include Leu174–Val175, Lys256, Gly278, and Gln287. Cys334 and Cys433 are disulfide-bonded. In terms of domain architecture, Rhodanese spans Ile388 to Lys463. The active-site Cysteine persulfide intermediate is Cys433.

It belongs to the ThiI family.

It localises to the cytoplasm. The enzyme catalyses [ThiI sulfur-carrier protein]-S-sulfanyl-L-cysteine + a uridine in tRNA + 2 reduced [2Fe-2S]-[ferredoxin] + ATP + H(+) = [ThiI sulfur-carrier protein]-L-cysteine + a 4-thiouridine in tRNA + 2 oxidized [2Fe-2S]-[ferredoxin] + AMP + diphosphate. It carries out the reaction [ThiS sulfur-carrier protein]-C-terminal Gly-Gly-AMP + S-sulfanyl-L-cysteinyl-[cysteine desulfurase] + AH2 = [ThiS sulfur-carrier protein]-C-terminal-Gly-aminoethanethioate + L-cysteinyl-[cysteine desulfurase] + A + AMP + 2 H(+). The protein operates within cofactor biosynthesis; thiamine diphosphate biosynthesis. Its function is as follows. Catalyzes the ATP-dependent transfer of a sulfur to tRNA to produce 4-thiouridine in position 8 of tRNAs, which functions as a near-UV photosensor. Also catalyzes the transfer of sulfur to the sulfur carrier protein ThiS, forming ThiS-thiocarboxylate. This is a step in the synthesis of thiazole, in the thiamine biosynthesis pathway. The sulfur is donated as persulfide by IscS. This Thermoplasma acidophilum (strain ATCC 25905 / DSM 1728 / JCM 9062 / NBRC 15155 / AMRC-C165) protein is tRNA sulfurtransferase.